Here is a 232-residue protein sequence, read N- to C-terminus: LOB domain-containing protein 11 (232 aa).

The segment at 1–50 (MLKMEINGGVATPTASAVAKVTETTTPVNSPSPTSSPPPPPSPQQPPQPP) is disordered. The span at 34-50 (TSSPPPPPSPQQPPQPP) shows a compositional bias: pro residues. An LOB domain is found at 54 to 155 (SPCAACKILR…AQLAKTQVEL (102 aa)). Positions 181-218 (EQGQQKMSFESSFESGDEFISSPDEESNDLGFLEDNNN) are disordered. The segment covering 188-202 (SFESSFESGDEFISS) has biased composition (low complexity).

Belongs to the LOB domain-containing protein family. As to expression, expressed in young shoots, stems, leaves and flowers.

This is LOB domain-containing protein 11 (LBD11) from Arabidopsis thaliana (Mouse-ear cress).